Here is a 375-residue protein sequence, read N- to C-terminus: GTPase HflX (375 aa).

The 178-residue stretch at 194-371 (PHIAIVGYAS…RIATLLAGTK (178 aa)) folds into the Hflx-type G domain. Residues 200–207 (GYASAGKT), 225–229 (FTTIT), 246–249 (DTVG), 314–317 (NKID), and 349–351 (SAK) each bind GTP. Residues Thr207 and Thr227 each contribute to the Mg(2+) site.

This sequence belongs to the TRAFAC class OBG-HflX-like GTPase superfamily. HflX GTPase family. In terms of assembly, monomer. Associates with the 50S ribosomal subunit. The cofactor is Mg(2+).

It localises to the cytoplasm. GTPase that associates with the 50S ribosomal subunit and may have a role during protein synthesis or ribosome biogenesis. In Hyperthermus butylicus (strain DSM 5456 / JCM 9403 / PLM1-5), this protein is GTPase HflX.